The chain runs to 2311 residues: Proto-oncogene tyrosine-protein kinase ROS (2311 aa).

Residues Met1 to Cys24 form the signal peptide. Topologically, residues Ser25–Asp1873 are extracellular. Asn49, Asn65, Asn77, Asn123, Asn132, Asn265, Asn287, Asn307, Asn333, Asn377, Asn405, Asn480, Asn607, Asn628, Asn706, Asn714, Asn911, Asn940, Asn962, Asn971, Asn1110, Asn1154, Asn1180, Asn1233, Asn1255, Asn1282, Asn1316, Asn1470, Asn1509, Asn1588, Asn1628, Asn1682, Asn1696, and Asn1730 each carry an N-linked (GlcNAc...) asparagine glycan. Fibronectin type-III domains lie at Lys110 to Val202 and Pro203 to Lys294. Positions Leu571 to Glu671 constitute a Fibronectin type-III 3 domain. Fibronectin type-III domains lie at Val952–Gly1047 and Ala1051–Ile1158. Fibronectin type-III domains follow at residues Asp1459–Gly1569, Val1570–Phe1669, Thr1671–Gly1766, and Val1767–Thr1868. A compositionally biased stretch (low complexity) spans Ser1754–Thr1764. The tract at residues Ser1754–Trp1786 is disordered. The span at Lys1775–Trp1786 shows a compositional bias: basic and acidic residues. N-linked (GlcNAc...) asparagine glycans are attached at residues Asn1792, Asn1795, and Asn1822. Residues Ile1874–Trp1898 form a helical membrane-spanning segment. Residues His1899 to Val2311 lie on the Cytoplasmic side of the membrane. Positions Leu1961–Leu2240 constitute a Protein kinase domain. ATP-binding positions include Leu1967–Val1975 and Lys1996. The active-site Proton acceptor is Asp2095. Tyr2131 is modified (phosphotyrosine; by autocatalysis).

This sequence belongs to the protein kinase superfamily. Tyr protein kinase family. Insulin receptor subfamily. In terms of assembly, interacts with VAV3; constitutive interaction mediating VAV3 phosphorylation. In terms of tissue distribution, highest expression in kidney. Also expressed in gonad, thymus, bursa, brain and kidney.

The protein resides in the cell membrane. It catalyses the reaction L-tyrosyl-[protein] + ATP = O-phospho-L-tyrosyl-[protein] + ADP + H(+). Functionally, orphan receptor tyrosine kinase (RTK) that may activate several downstream signaling pathways related to cell differentiation, proliferation, growth and survival including the PI3 kinase-mTOR signaling pathway. Mediates the phosphorylation of PTPN11, an activator of this pathway. May also phosphorylate and activate the transcription factor STAT3 to control anchorage-independent cell growth. Mediates the phosphorylation and the activation of VAV3, a guanine nucleotide exchange factor regulating cell morphology. May activate other downstream signaling proteins including AKT1, MAPK1, MAPK3, IRS1, and PLCG2. The polypeptide is Proto-oncogene tyrosine-protein kinase ROS (ROS1) (Gallus gallus (Chicken)).